A 453-amino-acid chain; its full sequence is tRNA modification GTPase MnmE (453 aa).

(6S)-5-formyl-5,6,7,8-tetrahydrofolate contacts are provided by R22, E79, and K119. The 162-residue stretch at 215-376 folds into the TrmE-type G domain; the sequence is GMKVVIAGRP…LQQHLKSLMG (162 aa). Residue N225 coordinates K(+). GTP is bound by residues 225–230, 244–250, 269–272, and 334–337; these read NAGKSS, TEIAGTT, DTAG, and NKAD. S229 serves as a coordination point for Mg(2+). K(+)-binding residues include T244, I246, and T249. T250 is a binding site for Mg(2+). (6S)-5-formyl-5,6,7,8-tetrahydrofolate is bound at residue K453.

This sequence belongs to the TRAFAC class TrmE-Era-EngA-EngB-Septin-like GTPase superfamily. TrmE GTPase family. Homodimer. Heterotetramer of two MnmE and two MnmG subunits. Requires K(+) as cofactor.

Its subcellular location is the cytoplasm. Exhibits a very high intrinsic GTPase hydrolysis rate. Involved in the addition of a carboxymethylaminomethyl (cmnm) group at the wobble position (U34) of certain tRNAs, forming tRNA-cmnm(5)s(2)U34. This Shewanella sediminis (strain HAW-EB3) protein is tRNA modification GTPase MnmE.